Here is a 100-residue protein sequence, read N- to C-terminus: Large ribosomal subunit protein uL23 (100 aa).

It belongs to the universal ribosomal protein uL23 family. As to quaternary structure, part of the 50S ribosomal subunit. Contacts protein L29, and trigger factor when it is bound to the ribosome.

In terms of biological role, one of the early assembly proteins it binds 23S rRNA. One of the proteins that surrounds the polypeptide exit tunnel on the outside of the ribosome. Forms the main docking site for trigger factor binding to the ribosome. This chain is Large ribosomal subunit protein uL23, found in Mycolicibacterium smegmatis (strain ATCC 700084 / mc(2)155) (Mycobacterium smegmatis).